Reading from the N-terminus, the 264-residue chain is Glutamate racemase (264 aa).

Substrate-binding positions include 10-11 and 42-43; these read DS and YG. The active-site Proton donor/acceptor is the Cys-73. Residue 74-75 participates in substrate binding; sequence NT. Cys-183 acts as the Proton donor/acceptor in catalysis. A substrate-binding site is contributed by 184-185; the sequence is TH.

This sequence belongs to the aspartate/glutamate racemases family.

It catalyses the reaction L-glutamate = D-glutamate. It functions in the pathway cell wall biogenesis; peptidoglycan biosynthesis. In terms of biological role, provides the (R)-glutamate required for cell wall biosynthesis. This Streptococcus mutans serotype c (strain ATCC 700610 / UA159) protein is Glutamate racemase.